A 288-amino-acid chain; its full sequence is Probable ketoamine kinase PM0587 (288 aa).

92-94 (EAL) contributes to the ATP binding site.

Belongs to the fructosamine kinase family.

Its function is as follows. Ketoamine kinase that phosphorylates ketoamines on the third carbon of the sugar moiety to generate ketoamine 3-phosphate. This Pasteurella multocida (strain Pm70) protein is Probable ketoamine kinase PM0587.